The following is a 266-amino-acid chain: 26 kDa endochitinase 2 (266 aa).

Residues 1–23 form the signal peptide; the sequence is MRSLAVVVAVVATVAMAIGTARG. 3 disulfides stabilise this stretch: C46–C108, C120–C128, and C227–C259. The active-site Proton donor is E90.

The protein belongs to the glycosyl hydrolase 19 family. Chitinase class II subfamily.

The catalysed reaction is Random endo-hydrolysis of N-acetyl-beta-D-glucosaminide (1-&gt;4)-beta-linkages in chitin and chitodextrins.. Defense against chitin-containing fungal pathogens. The protein is 26 kDa endochitinase 2 of Hordeum vulgare (Barley).